Here is a 1161-residue protein sequence, read N- to C-terminus: Voltage-gated inwardly rectifying potassium channel KCNH2 (1161 aa).

At 1–405 the chain is on the cytoplasmic side; the sequence is MPVRRGHVAP…RIHRWTILHY (405 aa). Residues 17–88 enclose the PAS domain; it reads TIIRKFEGQS…AAQIAQALLG (72 aa). The 53-residue stretch at 92-144 folds into the PAC domain; the sequence is RKVEIAFYRKDGSCFLCLVDVVPVKNEDGAVIMFILNFEVVMEKDMVGSPARD. The tract at residues 233-286 is disordered; it reads ALVGSCSPPPPVSAPGPHPSLRAHSLNPDASGSSCSLARTRSRESCASVRRASS. Phosphoserine occurs at positions 239 and 245. Residues 239–250 are compositionally biased toward pro residues; the sequence is SPPPPVSAPGPH. The span at 260-271 shows a compositional bias: polar residues; it reads PDASGSSCSLAR. S285, S286, S322, and S353 each carry phosphoserine. The chain crosses the membrane as a helical span at residues 406-426; sequence SPFKAVWDWLILLLVIYTAVF. Topologically, residues 427–452 are extracellular; sequence TPYSAAFLLKETEEGPPAPECGYACQ. The helical transmembrane segment at 453–473 threads the bilayer; the sequence is PLAVVDLIVDIMFIVDILINF. At 474–497 the chain is on the cytoplasmic side; the sequence is RTTYVNANEEVVSHPGRIAVHYFK. The helical transmembrane segment at 498 to 518 threads the bilayer; that stretch reads GWFLIDMVAAIPFDLLIFGSG. Residues 519 to 522 are Extracellular-facing; it reads SEEL. A helical; Voltage-sensor membrane pass occupies residues 523 to 543; it reads IGLLKTARLLRLVRVARKLDR. Residues 544-549 lie on the Cytoplasmic side of the membrane; the sequence is YSEYGA. Residues 550–570 form a helical membrane-spanning segment; the sequence is AVLLLLMCTFALIAHWLACIW. Over 571 to 613 the chain is Extracellular; it reads YAIGNMEQPHMDSRIGWLHNLGDQMGKPYNSSGLGGPSIKDKY. The N-linked (GlcNAc...) asparagine glycan is linked to N600. Positions 614-634 form an intramembrane region, pore-forming; it reads VTGLYFTFSSLTSVGFGNVSP. A Selectivity filter motif is present at residues 626 to 631; the sequence is SVGFGN. The Extracellular portion of the chain corresponds to 635 to 640; that stretch reads NTNSEK. A helical transmembrane segment spans residues 641-661; the sequence is IFSICVMLIGSLMYASIFGNV. Residues 662–1161 lie on the Cytoplasmic side of the membrane; that stretch reads SAIIQRLYSG…LHRHGSDPGS (500 aa). Positions 744–844 are cNMP-binding domain; the sequence is PFRGATKDCL…IHRDDLLEVL (101 aa). The interval 872-985 is disordered; that stretch reads GSPGSTEWEG…TEDCEKSSDT (114 aa). A phosphoserine mark is found at S873 and S876. Basic residues predominate over residues 885 to 894; that stretch reads RQRKRKLSFR. Over residues 930-941 the composition is skewed to low complexity; it reads GESPSSGPSSPE. Pro residues predominate over residues 962–972; that stretch reads SPRPPGEPPGG. R1016 carries the omega-N-methylarginine modification. The stretch at 1037 to 1064 forms a coiled coil; that stretch reads RGDVESRLDALQRQLNRLETRLSADMAT. Residues 1121 to 1161 are disordered; that stretch reads ELPPGAPELPQEGPTRRLSLPGQLGALTSQPLHRHGSDPGS. Position 1139 is a phosphoserine (S1139).

Belongs to the potassium channel family. H (Eag) (TC 1.A.1.20) subfamily. Kv11.1/KCNH2 sub-subfamily. As to quaternary structure, the potassium channel is probably composed of a homo- or heterotetrameric complex of pore-forming alpha subunits that can associate with modulating beta subunits. Interacts with DNAJB12 and DNAJB14; chaperones DNAJB12 and DNAJB14 promote tetramerization. Heteromultimer with KCNH6/ERG2 and KCNH7/ERG3. Interacts with ALG10B. Forms a stable complex with KCNE1 or KCNE2, and that this heteromultimerization regulates Inward rectifier potassium channel activity. Interacts with CANX. The core-glycosylated, but not the fully glycosylated form interacts with RNF207. Interacts with NDFIP1 and NDFIP2; this interaction decreases the cell membrane expression by targeting KCNH2, through interaction with NEDD4L, for the degradation through the multivesicular bodies (MVBs)-lysosomal pathway. Post-translationally, phosphorylated on serine and threonine residues. Phosphorylation by PKA inhibits ion conduction. As to expression, detected in heart, both in atrium and in left ventricle.

The protein resides in the cell membrane. The catalysed reaction is K(+)(in) = K(+)(out). Its function is as follows. Pore-forming (alpha) subunit of voltage-gated inwardly rectifying potassium channel. Characterized by unusual gating kinetics by producing relatively small outward currents during membrane depolarization and large inward currents during subsequent repolarization which reflect a rapid inactivation during depolarization and quick recovery from inactivation but slow deactivation (closing) during repolarization. Channel properties are modulated by cAMP and subunit assembly. Forms a stable complex with KCNE1 or KCNE2, and that this heteromultimerization regulates inward rectifier potassium channel activity. The chain is Voltage-gated inwardly rectifying potassium channel KCNH2 from Oryctolagus cuniculus (Rabbit).